Consider the following 218-residue polypeptide: Cytidylate kinase (218 aa).

Residue 11–19 participates in ATP binding; the sequence is GPSGVGKST.

Belongs to the cytidylate kinase family. Type 1 subfamily.

Its subcellular location is the cytoplasm. The catalysed reaction is CMP + ATP = CDP + ADP. It carries out the reaction dCMP + ATP = dCDP + ADP. This is Cytidylate kinase from Mycoplasmopsis synoviae (strain 53) (Mycoplasma synoviae).